A 725-amino-acid chain; its full sequence is MSQSNMVPVANNGDNNNDNENNNNNNNNGGTDNTNAGNDSGDQDFDSGNTSSGNHGEGLGNNQAPRHKKKKYNRHTQLQISEMEAFFRECPHPDDKQRYDLSAQLGLDPVQIKFWFQNKRTQNKNQQERFENSELRNLNNHLRSENQRLREAIHQALCPKCGGQTAIGEMTFEEHHLRILNARLTEEIKQLSVTAEKISRLTGIPVRSHPRVSPPNPPPNFEFGMGSKGNVGNHSRETTGPADANTKPIIMELAFGAMEELLVMAQVAEPLWMGGFNGTSLALNLDEYEKTFRTGLGPRLGGFRTEASRETALVAMCPTGIVEMLMQENLWSTMFAGIVGRARTHEQIMADAAGNFNGNLQIMSAEYQVLSPLVTTRESYFVRYCKQQGEGLWAVVDISIDHLLPNINLKCRRRPSGCLIQEMHSGYSKVTWVEHVEVDDAGSYSIFEKLICTGQAFAANRWVGTLVRQCERISSILSTDFQSVDSGDHITLTNHGKMSMLKIAERIARTFFAGMTNATGSTIFSGVEGEDIRVMTMKSVNDPGKPPGVIICAATSFWLPAPPNTVFDFLREATHRHNWDVLCNGEMMHKIAEITNGIDKRNCASLLRHGHTSKSKMMIVQETSTDPTASFVLYAPVDMTSMDITLHGGGDPDFVVILPSGFAIFPDGTGKPGGKEGGSLLTISFQMLVESGPEARLSVSSVATTENLIRTTVRRIKDLFPCQTA.

Residues 1–74 (MSQSNMVPVA…PRHKKKKYNR (74 aa)) form a disordered region. The segment covering 11–40 (NNGDNNNDNENNNNNNNNGGTDNTNAGNDS) has biased composition (low complexity). The segment covering 46–64 (DSGNTSSGNHGEGLGNNQA) has biased composition (polar residues). Basic residues predominate over residues 65-74 (PRHKKKKYNR). A DNA-binding region (homeobox) is located at residues 68-127 (KKKKYNRHTQLQISEMEAFFRECPHPDDKQRYDLSAQLGLDPVQIKFWFQNKRTQNKNQQ). Positions 117-201 (QNKRTQNKNQ…SVTAEKISRL (85 aa)) form a coiled coil. The START domain maps to 243–475 (DANTKPIIME…LVRQCERISS (233 aa)).

The protein belongs to the HD-ZIP homeobox family. Class IV subfamily. As to quaternary structure, interacts with AIL7/PLT7, ANT, BBM and AIL1. Expressed in siliques.

The protein resides in the nucleus. Its function is as follows. Probable transcription factor. Seems to promote cell differentiation. The protein is Homeobox-leucine zipper protein HDG3 of Arabidopsis thaliana (Mouse-ear cress).